We begin with the raw amino-acid sequence, 827 residues long: Periplasmic nitrate reductase (827 aa).

The segment at residues M1 to A34 is a signal peptide (tat-type signal). Residues I36–D92 enclose the 4Fe-4S Mo/W bis-MGD-type domain. Positions 43, 46, 50, and 78 each coordinate [4Fe-4S] cluster. Residues K80, Q148, N173, C177, W210–M217, S241–H245, Q260–D262, M371, Q375, N481, S507–D508, K530, D557, and T717–S726 each bind Mo-bis(molybdopterin guanine dinucleotide). F793 serves as a coordination point for substrate. 2 residues coordinate Mo-bis(molybdopterin guanine dinucleotide): N801 and K818.

Belongs to the prokaryotic molybdopterin-containing oxidoreductase family. NasA/NapA/NarB subfamily. Component of the periplasmic nitrate reductase NapAB complex composed of NapA and NapB. [4Fe-4S] cluster serves as cofactor. Requires Mo-bis(molybdopterin guanine dinucleotide) as cofactor. Post-translationally, predicted to be exported by the Tat system. The position of the signal peptide cleavage has not been experimentally proven.

It is found in the periplasm. It carries out the reaction 2 Fe(II)-[cytochrome] + nitrate + 2 H(+) = 2 Fe(III)-[cytochrome] + nitrite + H2O. Catalytic subunit of the periplasmic nitrate reductase complex NapAB. Receives electrons from NapB and catalyzes the reduction of nitrate to nitrite. The polypeptide is Periplasmic nitrate reductase (Paramagnetospirillum magnetotacticum (Aquaspirillum magnetotacticum)).